The sequence spans 398 residues: MMKIKPVKVESIENPKRFLNSRLLTKIEVEEAIEKALKQLYINIDYFGEEYPTPATFNNIYKVMDNTEWTNGFWTGCLWLAYEYNQDKKLKNIAHKNVLSFLNRINNRIALDHHDLGFLYTPSCTAEYRINGDVKALEATIKAADKLMERYQEKGGFIQAWGELGYKEHYRLIIDCLLNIQLLFFAYEQTGDEKYRQVAVNHFYASANNVVRDDSSAFHTFYFDPETGEPLKGVTRQGYSDESSWARGQAWGIYGIPLSYRKMKDYQQIILFKGMTNYFLNRLPEDKVSYWDLIFTDGSGQPRDTSATATAVCGIHEMLKYLPEVDPDKETYKYAMHTMLRSLIEQYSNNELIAGRPLLLHGVYSWHSGKGVDEGNIWGDYYYLEALIRFYKDWELYW.

Asp-115 functions as the Nucleophile in the catalytic mechanism. The substrate site is built by Asp-115, Asp-175, Gly-233, Thr-235, Arg-247, Trp-251, Ser-365, and Ser-368. Catalysis depends on Asp-175, which acts as the Proton donor.

Belongs to the glycosyl hydrolase 88 family. As to quaternary structure, monomer.

The catalysed reaction is beta-D-4-deoxy-Delta(4)-GlcpA-(1-&gt;3)-beta-D-GalpNAc6S + H2O = N-acetyl-beta-D-galactosamine 6-sulfate + 5-dehydro-4-deoxy-D-glucuronate. In terms of biological role, catalyzes the hydrolysis of unsaturated hyaluronate and chondroitin disaccharides. Also degrades unsaturated heparin disaccharides. Releases 4-deoxy-4,5-didehydro D-glucuronic acid or 4-deoxy-4,5-didehydro L-iduronic acid from chondroitin disaccharides, hyaluronan disaccharides and heparin disaccharides and cleaves both glycosidic (1-&gt;3) and (1-&gt;4) bonds. Prefers sulfated glycosaminoglycans compared to unsulfated glycosaminoglycans. Probably required for mammalian cells invasion through the degradation of extracellular sulfated glycosaminoglycans such as chondroitin and hyaluronan. This Streptococcus agalactiae serotype III (strain NEM316) protein is Unsaturated chondroitin disaccharide hydrolase.